We begin with the raw amino-acid sequence, 1593 residues long: ABC transporter C family member 8 (1593 aa).

10 consecutive transmembrane segments (helical) span residues 27–47, 75–95, 100–120, 135–155, 169–189, 280–300, 318–338, 392–412, 419–439, and 505–525; these read VVMT…LYYL, VIVS…IVSI, FEIL…GLVY, LYWV…TLAI, FSYF…VLFF, FYIA…GPTL, YDGL…SLLL, LCPY…SLVL, ASVF…LAIS, and LLLW…VYIL. One can recognise an ABC transmembrane type-1 1 domain in the interval 280–561; sequence FYIAALFKII…LPSVVSSIIE (282 aa). The ABC transporter 1 domain occupies 594 to 818; that stretch reads VKIDNATLEW…GSHFTELMSH (225 aa). Residue 627–634 participates in ATP binding; it reads GQVGSGKS. Residues 816-938 form a disordered region; it reads MSHDEQQQQL…PLQKGEKSSV (123 aa). Residues 844 to 875 are a coiled coil; sequence GDNKESENNEEQNEEEEGENENLLEKVLRKSR. The segment covering 851–865 has biased composition (acidic residues); it reads NNEEQNEEEEGENEN. A compositionally biased stretch (low complexity) spans 877-886; sequence RSPSPSSNRN. Residues 905 to 922 show a composition bias toward acidic residues; the sequence is EEDEQDERELMEDIDIDG. The next 5 membrane-spanning stretches (helical) occupy residues 1005–1025, 1064–1084, 1157–1177, 1251–1271, and 1280–1300; these read IGVL…LLSI, AKYY…ATFL, IIVI…VGAL, LAIR…LYTV, and GTAG…NWMV. The ABC transmembrane type-1 2 domain occupies 1010 to 1308; sequence ATCIIGFYVL…MVRMSCDLEN (299 aa). The ABC transporter 2 domain maps to 1344–1578; sequence IVFKNLWLTY…QDSIYYSLVK (235 aa). 1378–1385 provides a ligand contact to ATP; the sequence is GRTGAGKS.

It belongs to the ABC transporter superfamily. ABCC family. Conjugate transporter (TC 3.A.1.208) subfamily.

Its subcellular location is the membrane. This chain is ABC transporter C family member 8 (abcC8), found in Dictyostelium discoideum (Social amoeba).